A 780-amino-acid chain; its full sequence is 5-methyltetrahydropteroyltriglutamate--homocysteine methyltransferase (780 aa).

5-methyltetrahydropteroyltri-L-glutamate contacts are provided by residues 15–18 (RELK) and Lys114. Residues 457–459 (IGS) and Glu510 each bind L-homocysteine. L-methionine contacts are provided by residues 457 to 459 (IGS) and Glu510. 5-methyltetrahydropteroyltri-L-glutamate contacts are provided by residues 541-542 (RC) and Trp587. Asp625 provides a ligand contact to L-homocysteine. Asp625 contributes to the L-methionine binding site. Glu631 contributes to the 5-methyltetrahydropteroyltri-L-glutamate binding site. Positions 667, 669, and 691 each coordinate Zn(2+). His720 acts as the Proton donor in catalysis. Residue Cys752 participates in Zn(2+) binding.

The protein belongs to the vitamin-B12 independent methionine synthase family. Zn(2+) serves as cofactor.

It catalyses the reaction 5-methyltetrahydropteroyltri-L-glutamate + L-homocysteine = tetrahydropteroyltri-L-glutamate + L-methionine. It participates in amino-acid biosynthesis; L-methionine biosynthesis via de novo pathway; L-methionine from L-homocysteine (MetE route): step 1/1. In terms of biological role, catalyzes the transfer of a methyl group from 5-methyltetrahydrofolate to homocysteine resulting in methionine formation. The sequence is that of 5-methyltetrahydropteroyltriglutamate--homocysteine methyltransferase from Nitratidesulfovibrio vulgaris (strain DSM 19637 / Miyazaki F) (Desulfovibrio vulgaris).